The sequence spans 92 residues: Small ribosomal subunit protein uS19 (92 aa).

This sequence belongs to the universal ribosomal protein uS19 family.

Its function is as follows. Protein S19 forms a complex with S13 that binds strongly to the 16S ribosomal RNA. This is Small ribosomal subunit protein uS19 from Prochlorococcus marinus (strain MIT 9215).